Consider the following 426-residue polypeptide: Enolase (426 aa).

Residue Gln-162 participates in (2R)-2-phosphoglycerate binding. Glu-204 functions as the Proton donor in the catalytic mechanism. Mg(2+) contacts are provided by Asp-241, Glu-284, and Asp-311. 4 residues coordinate (2R)-2-phosphoglycerate: Lys-336, Arg-365, Ser-366, and Lys-387. The active-site Proton acceptor is Lys-336.

Belongs to the enolase family. Component of the RNA degradosome, a multiprotein complex involved in RNA processing and mRNA degradation. The cofactor is Mg(2+).

The protein localises to the cytoplasm. The protein resides in the secreted. It localises to the cell surface. It catalyses the reaction (2R)-2-phosphoglycerate = phosphoenolpyruvate + H2O. The protein operates within carbohydrate degradation; glycolysis; pyruvate from D-glyceraldehyde 3-phosphate: step 4/5. In terms of biological role, catalyzes the reversible conversion of 2-phosphoglycerate (2-PG) into phosphoenolpyruvate (PEP). It is essential for the degradation of carbohydrates via glycolysis. This chain is Enolase, found in Hydrogenovibrio crunogenus (strain DSM 25203 / XCL-2) (Thiomicrospira crunogena).